We begin with the raw amino-acid sequence, 261 residues long: Cytochrome c oxidase subunit 3 (261 aa).

The Mitochondrial matrix segment spans residues 1-15; sequence MTHQTHAYHMVNPSP. The helical transmembrane segment at 16–34 threads the bilayer; it reads WPLTGALSALLMTSGLIMW. Residues 35 to 40 are Mitochondrial intermembrane-facing; sequence FHFNSM. The helical transmembrane segment at 41 to 66 threads the bilayer; it reads TLLMLGLTTNMLTMYQWWRDIIREST. Over 67-72 the chain is Mitochondrial matrix; that stretch reads FQGHHT. A helical membrane pass occupies residues 73-105; it reads SAVQKGLRYGMILFIISEVLFFTGFFWAFYHSS. Residues 106-128 lie on the Mitochondrial intermembrane side of the membrane; sequence LAPTPELGGCWPPTGIHPLNPLE. The helical transmembrane segment at 129 to 152 threads the bilayer; the sequence is VPLLNTSVLLASGVSITWAHHSLM. The Mitochondrial matrix segment spans residues 153–155; that stretch reads EGN. Residues 156-183 traverse the membrane as a helical segment; the sequence is RNHMLQALFITIALGVYFTLLQASEYYE. Topologically, residues 184–190 are mitochondrial intermembrane; the sequence is APFTISD. Residues 191–223 form a helical membrane-spanning segment; the sequence is GVYGSTFFVATGFHGLHVIIGSTFLIVCFFRQL. Residues 224–232 are Mitochondrial matrix-facing; that stretch reads KFHFTSTHH. The helical transmembrane segment at 233–256 threads the bilayer; that stretch reads FGFEAAAWYWHFVDVVWLFLYVSI. Topologically, residues 257 to 261 are mitochondrial intermembrane; that stretch reads YWWGS.

The protein belongs to the cytochrome c oxidase subunit 3 family. As to quaternary structure, component of the cytochrome c oxidase (complex IV, CIV), a multisubunit enzyme composed of 14 subunits. The complex is composed of a catalytic core of 3 subunits MT-CO1, MT-CO2 and MT-CO3, encoded in the mitochondrial DNA, and 11 supernumerary subunits COX4I, COX5A, COX5B, COX6A, COX6B, COX6C, COX7A, COX7B, COX7C, COX8 and NDUFA4, which are encoded in the nuclear genome. The complex exists as a monomer or a dimer and forms supercomplexes (SCs) in the inner mitochondrial membrane with NADH-ubiquinone oxidoreductase (complex I, CI) and ubiquinol-cytochrome c oxidoreductase (cytochrome b-c1 complex, complex III, CIII), resulting in different assemblies (supercomplex SCI(1)III(2)IV(1) and megacomplex MCI(2)III(2)IV(2)).

The protein resides in the mitochondrion inner membrane. The catalysed reaction is 4 Fe(II)-[cytochrome c] + O2 + 8 H(+)(in) = 4 Fe(III)-[cytochrome c] + 2 H2O + 4 H(+)(out). Functionally, component of the cytochrome c oxidase, the last enzyme in the mitochondrial electron transport chain which drives oxidative phosphorylation. The respiratory chain contains 3 multisubunit complexes succinate dehydrogenase (complex II, CII), ubiquinol-cytochrome c oxidoreductase (cytochrome b-c1 complex, complex III, CIII) and cytochrome c oxidase (complex IV, CIV), that cooperate to transfer electrons derived from NADH and succinate to molecular oxygen, creating an electrochemical gradient over the inner membrane that drives transmembrane transport and the ATP synthase. Cytochrome c oxidase is the component of the respiratory chain that catalyzes the reduction of oxygen to water. Electrons originating from reduced cytochrome c in the intermembrane space (IMS) are transferred via the dinuclear copper A center (CU(A)) of subunit 2 and heme A of subunit 1 to the active site in subunit 1, a binuclear center (BNC) formed by heme A3 and copper B (CU(B)). The BNC reduces molecular oxygen to 2 water molecules using 4 electrons from cytochrome c in the IMS and 4 protons from the mitochondrial matrix. The chain is Cytochrome c oxidase subunit 3 (MT-CO3) from Damaliscus lunatus (Tsessebe).